The following is a 329-amino-acid chain: DNA-directed RNA polymerase subunit alpha (329 aa).

The alpha N-terminal domain (alpha-NTD) stretch occupies residues M1 to R235. Residues F249–E329 are alpha C-terminal domain (alpha-CTD).

This sequence belongs to the RNA polymerase alpha chain family. Homodimer. The RNAP catalytic core consists of 2 alpha, 1 beta, 1 beta' and 1 omega subunit. When a sigma factor is associated with the core the holoenzyme is formed, which can initiate transcription.

The enzyme catalyses RNA(n) + a ribonucleoside 5'-triphosphate = RNA(n+1) + diphosphate. In terms of biological role, DNA-dependent RNA polymerase catalyzes the transcription of DNA into RNA using the four ribonucleoside triphosphates as substrates. In Photorhabdus laumondii subsp. laumondii (strain DSM 15139 / CIP 105565 / TT01) (Photorhabdus luminescens subsp. laumondii), this protein is DNA-directed RNA polymerase subunit alpha.